We begin with the raw amino-acid sequence, 352 residues long: Pyrimidine monooxygenase RutA (352 aa).

FMN-binding positions include 49 to 50 (IK), Asn115, Glu124, 140 to 141 (RY), and Ser189.

It belongs to the NtaA/SnaA/DszA monooxygenase family. RutA subfamily.

The catalysed reaction is uracil + FMNH2 + NADH + O2 = (Z)-3-ureidoacrylate + FMN + NAD(+) + H2O + H(+). It catalyses the reaction thymine + FMNH2 + NADH + O2 = (Z)-2-methylureidoacrylate + FMN + NAD(+) + H2O + H(+). Functionally, catalyzes the pyrimidine ring opening between N-3 and C-4 by an unusual flavin hydroperoxide-catalyzed mechanism, adding oxygen atoms in the process to yield ureidoacrylate peracid, that immediately reacts with FMN forming ureidoacrylate and FMN-N(5)-oxide. The FMN-N(5)-oxide reacts spontaneously with NADH to produce FMN. Requires the flavin reductase RutF to regenerate FMN in vivo. This Caulobacter segnis (strain ATCC 21756 / DSM 7131 / JCM 7823 / NBRC 15250 / LMG 17158 / TK0059) (Mycoplana segnis) protein is Pyrimidine monooxygenase RutA.